We begin with the raw amino-acid sequence, 369 residues long: Chorismate synthase (369 aa).

NADP(+) is bound by residues R48 and R54. FMN contacts are provided by residues 125–127 (RSS), 238–239 (NA), G278, 293–297 (KPTSS), and R319.

Belongs to the chorismate synthase family. In terms of assembly, homotetramer. It depends on FMNH2 as a cofactor.

It carries out the reaction 5-O-(1-carboxyvinyl)-3-phosphoshikimate = chorismate + phosphate. The protein operates within metabolic intermediate biosynthesis; chorismate biosynthesis; chorismate from D-erythrose 4-phosphate and phosphoenolpyruvate: step 7/7. In terms of biological role, catalyzes the anti-1,4-elimination of the C-3 phosphate and the C-6 proR hydrogen from 5-enolpyruvylshikimate-3-phosphate (EPSP) to yield chorismate, which is the branch point compound that serves as the starting substrate for the three terminal pathways of aromatic amino acid biosynthesis. This reaction introduces a second double bond into the aromatic ring system. The sequence is that of Chorismate synthase from Nitrosococcus oceani (strain ATCC 19707 / BCRC 17464 / JCM 30415 / NCIMB 11848 / C-107).